Here is a 410-residue protein sequence, read N- to C-terminus: Mannosyl phosphorylinositol ceramide synthase regulatory protein CSG2 (410 aa).

The first 17 residues, 1–17, serve as a signal peptide directing secretion; the sequence is MSTTLLWFSSVIGYVIQ. The Lumenal portion of the chain corresponds to 18-50; the sequence is TKCLSNIQSKKEISVGPNGTIATPETNGDNGNS. N-linked (GlcNAc...) asparagine glycosylation is found at Asn-35 and Asn-49. Residues 51–71 traverse the membrane as a helical segment; the sequence is SSLTFYLTFMYFASWLLLVPA. Over 72-141 the chain is Cytoplasmic; sequence SRLWEKMRPM…SVATFKYVAK (70 aa). Residues 142–161 traverse the membrane as a helical segment; sequence LTVLALIMIVADLTYNMALS. Residues 162 to 167 are Lumenal-facing; that stretch reads LSPAFD. A helical transmembrane segment spans residues 168–187; it reads VALMQNTAIFEIVTLLYGVC. Topologically, residues 188-197 are cytoplasmic; it reads GISRKNYVFR. The chain crosses the membrane as a helical span at residues 198 to 217; sequence NFLIMMNAVIGILIISYTKA. Residues 218–245 are Lumenal-facing; the sequence is TCDMLAGKLSVNPNTGELSDPFLFDRLK. A helical transmembrane segment spans residues 246 to 265; it reads GALICGLGALIMGPFAVLWN. Residues 266-285 are Cytoplasmic-facing; it reads RWFCSNISKNENSAVVLVKQ. Residues 286-305 form a helical membrane-spanning segment; the sequence is STHMALIGIIGMVILLPFIP. Topologically, residues 306-324 are lumenal; the sequence is KFPSRESVESISLFYNDKS. The chain crosses the membrane as a helical span at residues 325-344; sequence FWFSLLGSIIFGSLPSLISI. Over 345–355 the chain is Cytoplasmic; sequence LELNRKAPAEY. Residues 356-374 traverse the membrane as a helical segment; that stretch reads LTTCNLGAIIFMGLAEWVC. Topologically, residues 375 to 385 are lumenal; it reads EPTQTTIVRWE. The chain crosses the membrane as a helical span at residues 386 to 404; the sequence is VIGYIMLTVSLLVLSVTLG. Residues 405–410 are Cytoplasmic-facing; it reads EGKYHH.

Heterodimer of CSH1 and CSG2, and SUR1 and CSG2.

It is found in the endoplasmic reticulum membrane. Required for calcium regulation. May regulate calcium accumulation by a non-vacuole organelle. Also regulates the activity of CSH1 and SUR1 during mannosyl phosphorylinositol ceramide synthesis. In Saccharomyces cerevisiae (strain ATCC 204508 / S288c) (Baker's yeast), this protein is Mannosyl phosphorylinositol ceramide synthase regulatory protein CSG2 (CSG2).